A 92-amino-acid polypeptide reads, in one-letter code: UPF0358 protein Exig_1994 (92 aa).

This sequence belongs to the UPF0358 family.

The sequence is that of UPF0358 protein Exig_1994 from Exiguobacterium sibiricum (strain DSM 17290 / CCUG 55495 / CIP 109462 / JCM 13490 / 255-15).